The following is a 156-amino-acid chain: Succinate dehydrogenase assembly factor 2-A, mitochondrial (156 aa).

The transit peptide at 1 to 24 (MLRQFLVSTAVRRVVVPSMAQTRC) directs the protein to the mitochondrion. Residues 35–62 (TPGEIVDYDDPPHIPVPEYPSRPDEPLE) form a disordered region.

It belongs to the SDHAF2 family. As to quaternary structure, interacts with the flavoprotein subunit within the SDH catalytic dimer.

The protein localises to the mitochondrion matrix. Functionally, plays an essential role in the assembly of succinate dehydrogenase (SDH), an enzyme complex (also referred to as respiratory complex II) that is a component of both the tricarboxylic acid (TCA) cycle and the mitochondrial electron transport chain, and which couples the oxidation of succinate to fumarate with the reduction of ubiquinone (coenzyme Q) to ubiquinol. Required for flavinylation (covalent attachment of FAD) of the flavoprotein subunit of the SDH catalytic dimer. This chain is Succinate dehydrogenase assembly factor 2-A, mitochondrial, found in Drosophila ananassae (Fruit fly).